The sequence spans 633 residues: DEAD-box ATP-dependent RNA helicase 27 (633 aa).

Positions 1–17 are enriched in basic and acidic residues; it reads MANLDMEQHSSENEEIK. Residues 1–147 are disordered; that stretch reads MANLDMEQHS…DKEEEKKLEE (147 aa). The stretch at 2 to 34 forms a coiled coil; sequence ANLDMEQHSSENEEIKKKKHKKRARDEAKKLKQ. 2 stretches are compositionally biased toward acidic residues: residues 37–47 and 74–83; these read MEEEPDHEDGD and DDGEDEAVAE. Basic residues predominate over residues 88 to 97; the sequence is KKKKKNKKLQ. Acidic residues-rich tracts occupy residues 103–114 and 131–140; these read NDEEDEVIAEEE and SEEEEVEDKE. Residues 117-153 are a coiled coil; that stretch reads KKKKKKQRKDTEAKSEEEEVEDKEEEKKLEETSIMTN. Positions 154-182 match the Q motif motif; it reads KTFESLSLSDNTYKSIKEMGFARMTQIQA. In terms of domain architecture, Helicase ATP-binding spans 185-360; it reads IPPLMMGEDV…RVSLTSPVYI (176 aa). Residue 198–205 coordinates ATP; the sequence is ARTGSGKT. A DEAD box motif is present at residues 308–311; the sequence is DEAD. The Helicase C-terminal domain occupies 386 to 534; sequence RLLFLLTFLK…EHEFEEKKLL (149 aa). A disordered region spans residues 608 to 633; the sequence is KREPVNKFKRGRGGGRPGGKSKFERY.

This sequence belongs to the DEAD box helicase family. DDX18/HAS1 subfamily.

The catalysed reaction is ATP + H2O = ADP + phosphate + H(+). The chain is DEAD-box ATP-dependent RNA helicase 27 (RH27) from Arabidopsis thaliana (Mouse-ear cress).